The chain runs to 54 residues: Large ribosomal subunit protein bL32 (54 aa).

The segment at 1–54 (MAVQQNRKTRSRRGMRRSHDALTAAQLSVDSTSGETHRRHHVTADGYYRGKKVI) is disordered. Basic residues predominate over residues 7-16 (RKTRSRRGMR). Residues 25–34 (AQLSVDSTSG) are compositionally biased toward polar residues.

This sequence belongs to the bacterial ribosomal protein bL32 family.

The protein is Large ribosomal subunit protein bL32 of Tolumonas auensis (strain DSM 9187 / NBRC 110442 / TA 4).